A 276-amino-acid chain; its full sequence is NADH-cytochrome b5 reductase 2 (276 aa).

One can recognise an FAD-binding FR-type domain in the interval 15 to 127 (EAKYPLPLIE…RGPTGRLFYN (113 aa)). N6-acetyllysine is present on Lys17. Phosphotyrosine is present on Tyr18. Residues 107–137 (ENMKIGDTILFRGPTGRLFYNEPGTLLIKAN) and 146–181 (LVHHLGMIAGGTGITPMLQLIRHITKDTSDETRMSL) contribute to the FAD site.

This sequence belongs to the flavoprotein pyridine nucleotide cytochrome reductase family. FAD is required as a cofactor.

It catalyses the reaction 2 Fe(III)-[cytochrome b5] + NADH = 2 Fe(II)-[cytochrome b5] + NAD(+) + H(+). In terms of biological role, NADH-cytochrome b5 reductases are involved in desaturation and elongation of fatty acids, cholesterol biosynthesis, drug metabolism, and, in erythrocyte, methemoglobin reduction. Responsible for NADH-dependent lucigenin chemiluminescence in spermatozoa by reducing both lucigenin and 2-[4-iodophenyl]-3-[4-nitrophenyl]-5-[2,4-disulfophenyl]-2H tetrazolium monosodium salt (WST-1). The chain is NADH-cytochrome b5 reductase 2 (Cyb5r2) from Mus musculus (Mouse).